The sequence spans 346 residues: Large ribosomal subunit protein uL3 (346 aa).

The interval 324 to 346 (RPPKKKPPVERPQITYVSRESKQ) is disordered.

This sequence belongs to the universal ribosomal protein uL3 family. In terms of assembly, part of the 50S ribosomal subunit. Forms a cluster with proteins L14 and L24e.

Its function is as follows. One of the primary rRNA binding proteins, it binds directly near the 3'-end of the 23S rRNA, where it nucleates assembly of the 50S subunit. The polypeptide is Large ribosomal subunit protein uL3 (Thermococcus kodakarensis (strain ATCC BAA-918 / JCM 12380 / KOD1) (Pyrococcus kodakaraensis (strain KOD1))).